Consider the following 101-residue polypeptide: DNA-binding protein Fis (101 aa).

The H-T-H motif DNA-binding region spans 77–96; that stretch reads QTRAANMLGINRGTLRKKLK.

This sequence belongs to the transcriptional regulatory Fis family. As to quaternary structure, homodimer.

Its function is as follows. Activates ribosomal RNA transcription. Plays a direct role in upstream activation of rRNA promoters. The sequence is that of DNA-binding protein Fis from Shewanella sediminis (strain HAW-EB3).